The primary structure comprises 1213 residues: tRNA wybutosine-synthesizing protein 4 (1213 aa).

Low complexity-rich tracts occupy residues 1–13 (METT…PATT) and 39–52 (ATTT…TTPT). The disordered stretch occupies residues 1–76 (METTEEVVAP…DDQVMGTNNS (76 aa)). Basic and acidic residues predominate over residues 53-67 (HNEHASAKDPRKAQD). Arginine 117, glycine 148, and aspartate 180 together coordinate S-adenosyl-L-methionine. Residues 215-248 (STPAATTTAAATTTTTTELKTTAATASSTSTEAP) are compositionally biased toward low complexity. Residues 215–272 (STPAATTTAAATTTTTTELKTTAATASSTSTEAPQKPKKSPKPKDKSKAARAPAPTTA) form a disordered region. S-adenosyl-L-methionine-binding positions include 289–290 (DL) and glutamate 318. The disordered stretch occupies residues 879 to 900 (EPRSLPLRNQAPNGAEGNANGS). The JmjC domain occupies 1006–1166 (PTEKPAVLSD…YAAGKDVYGN (161 aa)).

It belongs to the methyltransferase superfamily. LCMT family.

The catalysed reaction is 7-[(3S)-3-amino-3-carboxypropyl]wyosine(37) in tRNA(Phe) + S-adenosyl-L-methionine = 7-[(3S)-(3-amino-3-methoxycarbonyl)propyl]wyosine(37) in tRNA(Phe) + S-adenosyl-L-homocysteine. It catalyses the reaction 7-[(3S)-(3-amino-3-methoxycarbonyl)propyl]wyosine(37) in tRNA(Phe) + S-adenosyl-L-methionine + CO2 = wybutosine(37) in tRNA(Phe) + S-adenosyl-L-homocysteine + 2 H(+). Its pathway is tRNA modification; wybutosine-tRNA(Phe) biosynthesis. Its function is as follows. Probable S-adenosyl-L-methionine-dependent methyltransferase that acts as a component of the wybutosine biosynthesis pathway. Wybutosine is a hyper modified guanosine with a tricyclic base found at the 3'-position adjacent to the anticodon of eukaryotic phenylalanine tRNA. May methylate the carboxyl group of leucine residues to form alpha-leucine ester residues. The sequence is that of tRNA wybutosine-synthesizing protein 4 (lcm-2) from Neurospora crassa (strain ATCC 24698 / 74-OR23-1A / CBS 708.71 / DSM 1257 / FGSC 987).